Here is a 513-residue protein sequence, read N- to C-terminus: Maturase K (513 aa).

This sequence belongs to the intron maturase 2 family. MatK subfamily.

It is found in the plastid. The protein resides in the chloroplast. In terms of biological role, usually encoded in the trnK tRNA gene intron. Probably assists in splicing its own and other chloroplast group II introns. The sequence is that of Maturase K from Danthonia spicata (Poverty oatgrass).